The sequence spans 78 residues: uncharacterized protein (78 aa).

A disordered region spans residues 58–78 (EANDPEKKIPSTAAKAISLSP).

This is an uncharacterized protein from Vaccinia virus (strain Copenhagen) (VACV).